A 638-amino-acid chain; its full sequence is Probable ATP-binding protein YheS (638 aa).

ABC transporter domains lie at 2 to 246 (IIFS…AQQT) and 313 to 531 (VMIE…STSE). ATP is bound by residues 34-41 (GKNGCGKS) and 349-356 (GKNGAGKS). Positions 525-563 (EQNSTSENKVSEKVGDNENSVQNRKEQKRREAELRQQTA) are disordered. Basic and acidic residues predominate over residues 547 to 558 (NRKEQKRREAEL).

Belongs to the ABC transporter superfamily. ABCF family. YheS subfamily.

In terms of biological role, genetic data indicate it may be involved in ribosome assembly or function. This chain is Probable ATP-binding protein YheS, found in Haemophilus influenzae (strain ATCC 51907 / DSM 11121 / KW20 / Rd).